The chain runs to 292 residues: Phosphatidylglycerol--prolipoprotein diacylglyceryl transferase (292 aa).

4 helical membrane-spanning segments follow: residues 24 to 44, 65 to 85, 110 to 130, and 136 to 156; these read ISVH…LLIA, FFIW…VLIY, GISG…AIIF, and QSFW…YVFG. Arg-157 serves as a coordination point for a 1,2-diacyl-sn-glycero-3-phospho-(1'-sn-glycerol). The next 3 helical transmembrane spans lie at 192-212, 219-239, and 256-276; these read SQLF…ICLL, GTLL…CEYF, and GQIL…FVFV.

The protein belongs to the Lgt family.

The protein localises to the cell inner membrane. It carries out the reaction L-cysteinyl-[prolipoprotein] + a 1,2-diacyl-sn-glycero-3-phospho-(1'-sn-glycerol) = an S-1,2-diacyl-sn-glyceryl-L-cysteinyl-[prolipoprotein] + sn-glycerol 1-phosphate + H(+). The protein operates within protein modification; lipoprotein biosynthesis (diacylglyceryl transfer). Functionally, catalyzes the transfer of the diacylglyceryl group from phosphatidylglycerol to the sulfhydryl group of the N-terminal cysteine of a prolipoprotein, the first step in the formation of mature lipoproteins. This is Phosphatidylglycerol--prolipoprotein diacylglyceryl transferase from Helicobacter hepaticus (strain ATCC 51449 / 3B1).